Reading from the N-terminus, the 102-residue chain is Small ribosomal subunit protein uS10 (102 aa).

This sequence belongs to the universal ribosomal protein uS10 family. Part of the 30S ribosomal subunit.

In terms of biological role, involved in the binding of tRNA to the ribosomes. The sequence is that of Small ribosomal subunit protein uS10 from Pelagibacter ubique (strain HTCC1062).